A 458-amino-acid chain; its full sequence is MSITKEFDTITAISTPLGEGAIGIVRLSGTDALAIAQSVFKGKNLEQVASHTINYGHIIDPKTGTIIDEVMVSVMLAPKTFTRENVVEINTHGGIAVTNEILQLLIRQGARMAEPGEFTKRAFLNGRVDLTQAEAVMDIIRAKTDKAMTIAVKQLDGSLSQLINDTRQEILNTLAQVEVNIDYPEYDDVEEMTTALLREKTQEFQSLLENLLRTAKRGKILREGLSTAIIGRPNVGKSSLLNNLLREDKAIVTDIAGTTRDVIEEYVNIKGVPLKLVDTAGIRETDDLVEQIGVERSKKALQEADLVLLVLNASEKLTDQDRALLNLSQDSNRIILLNKTDLEQKIELEQLPDDYIPISVLTNQNINLIEDRINQLFFDNAGLVEQDATYLSNARHISLIEKTVQSLEAVNDGLALGMPVDLLQVDLTRTWEILGEITGDAAPDELITQLFSQFCLGK.

(6S)-5-formyl-5,6,7,8-tetrahydrofolate contacts are provided by arginine 26, glutamate 88, and arginine 127. Positions 224 to 378 constitute a TrmE-type G domain; sequence GLSTAIIGRP…IEDRINQLFF (155 aa). Position 234 (asparagine 234) interacts with K(+). Residues 234-239, 253-259, and 278-281 contribute to the GTP site; these read NVGKSS, TDIAGTT, and DTAG. A Mg(2+)-binding site is contributed by serine 238. 3 residues coordinate K(+): threonine 253, isoleucine 255, and threonine 258. Threonine 259 is a binding site for Mg(2+). Residue lysine 458 coordinates (6S)-5-formyl-5,6,7,8-tetrahydrofolate.

The protein belongs to the TRAFAC class TrmE-Era-EngA-EngB-Septin-like GTPase superfamily. TrmE GTPase family. As to quaternary structure, homodimer. Heterotetramer of two MnmE and two MnmG subunits. Requires K(+) as cofactor.

The protein localises to the cytoplasm. Exhibits a very high intrinsic GTPase hydrolysis rate. Involved in the addition of a carboxymethylaminomethyl (cmnm) group at the wobble position (U34) of certain tRNAs, forming tRNA-cmnm(5)s(2)U34. This chain is tRNA modification GTPase MnmE, found in Streptococcus pyogenes serotype M3 (strain ATCC BAA-595 / MGAS315).